Here is a 127-residue protein sequence, read N- to C-terminus: Protein yippee-like 4 (127 aa).

One can recognise a Yippee domain in the interval 27–124 (RTYSCVHCRA…IEMSHMVKDN (98 aa)). Positions 31, 34, 87, and 90 each coordinate Zn(2+). T92 and T93 each carry phosphothreonine. Phosphotyrosine is present on Y98.

It belongs to the yippee family. In terms of tissue distribution, detected in brain, spleen and testis.

It is found in the nucleus. The protein localises to the nucleolus. The chain is Protein yippee-like 4 (Ypel4) from Mus musculus (Mouse).